The following is a 62-amino-acid chain: Photosystem II reaction center X protein (62 aa).

A helical membrane pass occupies residues Ile-26–Phe-46.

Belongs to the PsbX family. Type 2 subfamily. In terms of assembly, PSII consists of a core antenna complex that captures photons, and an electron transfer chain that converts photonic excitation into a charge separation. PSII forms dimeric complexes.

Its subcellular location is the cellular thylakoid membrane. Involved in the binding and/or turnover of quinones at the Q(B) site of Photosystem II. The protein is Photosystem II reaction center X protein of Prochlorococcus marinus subsp. pastoris (strain CCMP1986 / NIES-2087 / MED4).